We begin with the raw amino-acid sequence, 459 residues long: Argininosuccinate lyase (459 aa).

This sequence belongs to the lyase 1 family. Argininosuccinate lyase subfamily.

It localises to the cytoplasm. It catalyses the reaction 2-(N(omega)-L-arginino)succinate = fumarate + L-arginine. It functions in the pathway amino-acid biosynthesis; L-arginine biosynthesis; L-arginine from L-ornithine and carbamoyl phosphate: step 3/3. This Geobacillus thermodenitrificans (strain NG80-2) protein is Argininosuccinate lyase.